The chain runs to 1402 residues: Transcription elongation factor spt-6 (1402 aa).

The tract at residues 1 to 199 is disordered; it reads MSNSMRDLID…PKDRGLNIDT (199 aa). Composition is skewed to acidic residues over residues 10-28, 40-52, 62-75, and 90-102; these read DGEA…DEEA, DSSE…EDEE, IVDE…EDSD, and EEEE…DLDL. A compositionally biased stretch (basic and acidic residues) spans 123–135; the sequence is HRDDHRPTERRGL. The segment covering 161–176 has biased composition (acidic residues); the sequence is DEFDDFIEDDYPEDDE. Basic and acidic residues predominate over residues 177–199; the sequence is ERRHREEDEEVARPKDRGLNIDT. An S1 motif domain is found at 1094–1161; the sequence is GMIVAANVRV…KEFVSKLSMR (68 aa). An SH2 domain is found at 1209-1306; that stretch reads PLFKPFNSTQ…KKVDELMQCD (98 aa).

The protein belongs to the SPT6 family.

The protein resides in the nucleus. It localises to the chromosome. Its function is as follows. Histone H3-H4 chaperone that plays a role in maintenance of chromatin structure during RNA polymerase II transcription elongation thereby repressing transcription initiation from cryptic promoters. Mediates the reassembly of nucleosomes onto the promoters of at least a selected set of genes during repression; the nucleosome reassembly is essential for transcriptional repression. Essential for viability. This is Transcription elongation factor spt-6 (spt-6) from Neurospora crassa (strain ATCC 24698 / 74-OR23-1A / CBS 708.71 / DSM 1257 / FGSC 987).